The sequence spans 351 residues: Large ribosomal subunit protein uL3 (351 aa).

2 disordered regions span residues 1 to 31 (MGHR…TPRT) and 246 to 271 (KGSR…GQLG).

Belongs to the universal ribosomal protein uL3 family. Part of the 50S ribosomal subunit. Forms a cluster with proteins L14 and L24e.

Functionally, one of the primary rRNA binding proteins, it binds directly near the 3'-end of the 23S rRNA, where it nucleates assembly of the 50S subunit. This is Large ribosomal subunit protein uL3 from Saccharolobus solfataricus (strain ATCC 35092 / DSM 1617 / JCM 11322 / P2) (Sulfolobus solfataricus).